The primary structure comprises 93 residues: LSM complex subunit lsm3 (93 aa).

The 85-residue stretch at 9–93 (EPLDLVRLSL…SVILIAPPRN (85 aa)) folds into the Sm domain. Ser-84 is subject to Phosphoserine.

It belongs to the snRNP Sm proteins family. Component of the heptameric LSM1-LSM7 complex that forms a seven-membered ring structure with a donut shape. The LSm subunits are arranged in the order lsm1, lsm2, lsm3, lsm6, lsm5, lsm7 and lsm4. Component of the heptameric LSM2-LSM8 complex that forms a seven-membered ring structure with a donut shape. The LSm subunits are arranged in the order lsm8, lsm2, lsm3, lsm6, lsm5, lsm7 and lsm4.

The protein localises to the nucleus. It is found in the cytoplasm. Its function is as follows. Component of LSm protein complexes, which are involved in RNA processing and may function in a chaperone-like manner. Component of the cytoplasmic LSM1-LSM7 complex which is involved in mRNA degradation by activating the decapping step. The LSM1-LSM7 complex loads onto the 3'-end of single stranded RNA. Component of the nuclear LSM2-LSM8 complex, which is involved in spliceosome assembly. The LSM2-LSM8 complex plays a role in the biogenesis of the spliceosomal U4/U6-U5 tri-snRNP complex by accelerating prp24-mediated annealing of U4/U6 di-snRNA. The LSM2-LSM8 complex binds U6 snRNA terminating with a cyclic 2',3' phosphate group; RNA with an unmodified 3' hydroxyl or non-cyclic 3' phosphate is bound less tightly. This chain is LSM complex subunit lsm3 (lsm3), found in Schizosaccharomyces pombe (strain 972 / ATCC 24843) (Fission yeast).